The following is a 245-amino-acid chain: Orotidine 5'-phosphate decarboxylase (245 aa).

Residues Asp-22, Lys-44, 71-80, Thr-131, Arg-192, Gln-201, Gly-221, and Arg-222 each bind substrate; that span reads DLKFHDIPNT. Residue Lys-73 is the Proton donor of the active site.

It belongs to the OMP decarboxylase family. Type 1 subfamily. As to quaternary structure, homodimer.

The catalysed reaction is orotidine 5'-phosphate + H(+) = UMP + CO2. It participates in pyrimidine metabolism; UMP biosynthesis via de novo pathway; UMP from orotate: step 2/2. Catalyzes the decarboxylation of orotidine 5'-monophosphate (OMP) to uridine 5'-monophosphate (UMP). The polypeptide is Orotidine 5'-phosphate decarboxylase (Escherichia coli (strain 55989 / EAEC)).